The following is a 500-amino-acid chain: Tyrosine decarboxylase 2 (500 aa).

Repeat copies occupy residues 65-122 and 125-176. Residues 65–176 are 2 X approximate tandem repeats; it reads EDIRQKIVPG…KFLNRFGKRS (112 aa). Serine 89 provides a ligand contact to substrate. Alanine 153 and serine 154 together coordinate pyridoxal 5'-phosphate. Histidine 189 contacts substrate. 2 residues coordinate pyridoxal 5'-phosphate: threonine 248 and asparagine 302. Residue lysine 305 is modified to N6-(pyridoxal phosphate)lysine.

Belongs to the group II decarboxylase family. Pyridoxal 5'-phosphate is required as a cofactor. As to expression, mostly expressed in bulbs, and, to a lower extent, in stems, roots, leaves and flowers.

The catalysed reaction is L-tyrosine + H(+) = tyramine + CO2. It participates in alkaloid biosynthesis. In terms of biological role, catalyzes the decarboxylation of L-tyrosine to tyramine, which is converted to norbelladine, a precursor to all Amaryllidaceae alkaloids such as galanthamine, lycorine and haemanthamine, and including haemanthamine- and crinamine-type alkaloids, promising anticancer agents. The chain is Tyrosine decarboxylase 2 from Narcissus pseudonarcissus (Daffodil).